The primary structure comprises 514 residues: Palmitoyltransferase pfa3 (514 aa).

Topologically, residues 1–31 (MATLAMSTPSSPTWPKRRPKAWAMRCERYCC) are cytoplasmic. Residues 32 to 52 (AAASYFPLAFVYSLTTWAVYV) form a helical membrane-spanning segment. The Lumenal portion of the chain corresponds to 53–64 (EASVGLKPSSSS). Residues 65-85 (WIGLPSSILGVVLYLALNISY) form a helical membrane-spanning segment. Residues 86-174 (TTAVFTDPGS…TCVGLRNYKA (89 aa)) are Cytoplasmic-facing. The 51-residue stretch at 130 to 180 (RFCKKCQCPKPDRAHHCSTCKRCVLKMDHHCPWLATCVGLRNYKAFLLFLI) folds into the DHHC domain. The chain crosses the membrane as a helical span at residues 175-195 (FLLFLIYTSLFCWVDFGVSAI). Over 196–209 (WIWTEVFNDTRYMD) the chain is Lumenal. The helical transmembrane segment at 210–230 (GILPVNVVLLSILGGIIGLVL) threads the bilayer. The Cytoplasmic portion of the chain corresponds to 231–514 (TGFTAWHISL…SREDDWRDWD (284 aa)). 2 disordered regions span residues 307 to 336 (VTRP…DLER) and 436 to 514 (GNEL…RDWD). The segment covering 318–328 (DNLTPAQQALS) has biased composition (polar residues). A compositionally biased stretch (basic and acidic residues) spans 505–514 (SREDDWRDWD).

Belongs to the DHHC palmitoyltransferase family. PFA3 subfamily. Autopalmitoylated.

Its subcellular location is the vacuole membrane. It catalyses the reaction L-cysteinyl-[protein] + hexadecanoyl-CoA = S-hexadecanoyl-L-cysteinyl-[protein] + CoA. In terms of biological role, palmitoyltransferase specific for VAC8. Palmitoylates VAC8 at one or more of its N-terminal cysteine residues, which is required for its proper membrane localization. This chain is Palmitoyltransferase pfa3 (pfa3), found in Emericella nidulans (strain FGSC A4 / ATCC 38163 / CBS 112.46 / NRRL 194 / M139) (Aspergillus nidulans).